A 145-amino-acid chain; its full sequence is uncharacterized protein (145 aa).

A helical membrane pass occupies residues 16–36 (VLAYLLQLSASLVLPVAIWLI).

The protein resides in the mitochondrion membrane. This is an uncharacterized protein from Arabidopsis thaliana (Mouse-ear cress).